The following is a 500-amino-acid chain: Lysine--tRNA ligase (500 aa).

Residues glutamate 410 and glutamate 417 each contribute to the Mg(2+) site.

Belongs to the class-II aminoacyl-tRNA synthetase family. Homodimer. Mg(2+) is required as a cofactor.

Its subcellular location is the cytoplasm. It catalyses the reaction tRNA(Lys) + L-lysine + ATP = L-lysyl-tRNA(Lys) + AMP + diphosphate. The sequence is that of Lysine--tRNA ligase from Pseudomonas savastanoi pv. phaseolicola (strain 1448A / Race 6) (Pseudomonas syringae pv. phaseolicola (strain 1448A / Race 6)).